The chain runs to 287 residues: Cyclopropane mycolic acid synthase MmaA2 (287 aa).

Residues 33–34 (YS), 72–74 (GCG), 94–99 (TLSKNQ), 123–124 (WE), and I136 each bind S-adenosyl-L-methionine. Residue C269 is part of the active site.

It belongs to the CFA/CMAS family.

It carries out the reaction a 1-acyl-2-(9Z)-enoyl-sn-glycero-3-phospholipid + S-adenosyl-L-methionine = a 1-acyl-2-(9-cyclopronane)-acyl-sn-glycero-3-phospholipid + S-adenosyl-L-homocysteine + H(+). The protein operates within lipid metabolism; mycolic acid biosynthesis. Catalyzes the conversion of a double bond to a cis cyclopropane ring at the distal position of an alpha mycolic acid via the transfer of a methylene group from S-adenosyl-L-methionine. MmaA2 also catalyzes the biosynthesis of the cis-cyclopropanated methoxymycolates. Cyclopropanated mycolic acids are key factors participating in cell envelope permeability, host immunomodulation and persistence. This is Cyclopropane mycolic acid synthase MmaA2 (mmaA2) from Mycobacterium tuberculosis (strain ATCC 25177 / H37Ra).